The chain runs to 123 residues: uncharacterized protein (123 aa).

A signal peptide spans 1-20; it reads MARTLALRASAGLVAGMAMA.

This is an uncharacterized protein from Mycobacterium bovis (strain ATCC BAA-935 / AF2122/97).